Here is a 245-residue protein sequence, read N- to C-terminus: Aliphatic sulfonates import ATP-binding protein SsuB 1 (245 aa).

Residues 8–223 (VSITGLRKSF…ERADPDILRY (216 aa)) enclose the ABC transporter domain. An ATP-binding site is contributed by 40–47 (GPSGTGKT).

The protein belongs to the ABC transporter superfamily. Aliphatic sulfonates importer (TC 3.A.1.17.2) family. In terms of assembly, the complex is composed of two ATP-binding proteins (SsuB), two transmembrane proteins (SsuC) and a solute-binding protein (SsuA).

The protein resides in the cell membrane. It catalyses the reaction ATP + H2O + aliphatic sulfonate-[sulfonate-binding protein]Side 1 = ADP + phosphate + aliphatic sulfonateSide 2 + [sulfonate-binding protein]Side 1.. Functionally, part of the ABC transporter complex SsuABC involved in aliphatic sulfonates import. Responsible for energy coupling to the transport system. The polypeptide is Aliphatic sulfonates import ATP-binding protein SsuB 1 (Nocardia farcinica (strain IFM 10152)).